The primary structure comprises 261 residues: uncharacterized protein (261 aa).

This sequence belongs to the BtpA family.

This is an uncharacterized protein from Methanocaldococcus jannaschii (strain ATCC 43067 / DSM 2661 / JAL-1 / JCM 10045 / NBRC 100440) (Methanococcus jannaschii).